Here is a 1044-residue protein sequence, read N- to C-terminus: Spindle assembly checkpoint serine/threonine-protein kinase bub1 (1044 aa).

A BUB1 N-terminal domain is found at 36–204 (FQEELDIIEE…SSPFPPPRIV (169 aa)). 5 disordered regions span residues 209–259 (PVSS…PLLY), 317–343 (VHHD…TPTR), 404–446 (ESLE…SQEE), 484–555 (KNSN…DSNS), and 685–705 (IKPK…SLDG). A compositionally biased stretch (polar residues) spans 223–239 (QVFSDASSSRDSQNASD). A compositionally biased stretch (polar residues) spans 430–442 (NSSNSGATSLTGR). A compositionally biased stretch (low complexity) spans 504-518 (STLQEETATGTTSTT). Polar residues predominate over residues 544–555 (RSPQYSTVDSNS). Thr550 bears the Phosphothreonine mark. Positions 718-1044 (LSVISKLGQG…LLKSIEKRKI (327 aa)) constitute a Protein kinase domain. The ATP site is built by Ala728, Phe729, Ala730, Lys762, and Asp809. Residue Asp861 is the Proton acceptor of the active site. ATP contacts are provided by Asp865, Asn866, and Asp900.

This sequence belongs to the protein kinase superfamily. Ser/Thr protein kinase family. BUB1 subfamily. As to quaternary structure, part of the BUB1-BUB3 complex, composed of bub1 and bub3. Interacts with spc7 (when phosphorylated on MELT motifs); to recruit the bub1-bub3 complex to kinetochores. Interacts with mad3. In terms of processing, autophosphorylated.

It localises to the nucleus. Its subcellular location is the chromosome. It is found in the centromere. The protein localises to the kinetochore. It carries out the reaction L-seryl-[protein] + ATP = O-phospho-L-seryl-[protein] + ADP + H(+). The catalysed reaction is L-threonyl-[protein] + ATP = O-phospho-L-threonyl-[protein] + ADP + H(+). Its function is as follows. Involved in mitotic spindle assembly checkpoint signaling, a process that delays anaphase until chromosomes are bioriented on the spindle, and in the repair of incorrect mitotic kinetochore-spindle microtubule attachments. Acts as a kinetochore scaffold for the recruitment of other spindle assembly checkpoint components. In Schizosaccharomyces pombe (strain 972 / ATCC 24843) (Fission yeast), this protein is Spindle assembly checkpoint serine/threonine-protein kinase bub1.